The chain runs to 183 residues: Ribosome-recycling factor (183 aa).

This sequence belongs to the RRF family.

Its subcellular location is the cytoplasm. Its function is as follows. Responsible for the release of ribosomes from messenger RNA at the termination of protein biosynthesis. May increase the efficiency of translation by recycling ribosomes from one round of translation to another. The polypeptide is Ribosome-recycling factor (Acetivibrio thermocellus (strain ATCC 27405 / DSM 1237 / JCM 9322 / NBRC 103400 / NCIMB 10682 / NRRL B-4536 / VPI 7372) (Clostridium thermocellum)).